The primary structure comprises 337 residues: Geranylgeranyl pyrophosphate synthase subD (337 aa).

Isopentenyl diphosphate contacts are provided by lysine 53, arginine 56, and histidine 85. Residues aspartate 92 and aspartate 96 each coordinate Mg(2+). Arginine 101 contacts dimethylallyl diphosphate. Arginine 102 contributes to the isopentenyl diphosphate binding site. The dimethylallyl diphosphate site is built by lysine 179, threonine 180, and glutamine 219. Aspartate 222 serves as a coordination point for Mg(2+). Asparagine 226, lysine 236, and lysine 246 together coordinate dimethylallyl diphosphate.

Belongs to the FPP/GGPP synthase family. Requires Mg(2+) as cofactor.

It catalyses the reaction isopentenyl diphosphate + dimethylallyl diphosphate = (2E)-geranyl diphosphate + diphosphate. The catalysed reaction is isopentenyl diphosphate + (2E)-geranyl diphosphate = (2E,6E)-farnesyl diphosphate + diphosphate. The enzyme catalyses isopentenyl diphosphate + (2E,6E)-farnesyl diphosphate = (2E,6E,10E)-geranylgeranyl diphosphate + diphosphate. The protein operates within secondary metabolite biosynthesis; terpenoid biosynthesis. Its function is as follows. Geranylgeranyl pyrophosphate synthase; part of the gene cluster that mediates the biosynthesis of the immunosuppressants subglutinols, meroterpenoids consisting of an alpha-pyrone (4-hydroxy-5,6-dimethyl-2-pyrone) moiety attached to a decalin core fused to a five-membered cyclic ether carrying a prenylside chain. The first step of the pathway is the synthesis of the alpha-pyrone moiety by the polyketide synthase subA via condensation of one acetyl-CoA starter unit with 3 malonyl-CoA units and 2 methylations. The alpha-pyrone is then combined with geranylgeranyl pyrophosphate (GGPP) formed by the GGPP synthase subD through the action of the prenyltransferase subC to yield a linear alpha-pyrone diterpenoid. Subsequent steps in the subglutinol biosynthetic pathway involve the decalin core formation, which is thought to be initiated by the epoxidation of the C10-C11 olefin by the FAD-dependent oxidoreductase subE. The following cyclization cascade would be catalyzed by the terpene cyclase subB. Lastly, the FAD-dependent dehydrogenase subF probably catalyzes the five-membered cyclic ether formation to complete the formation of subglutinol A. Subsequent redox reactions appear to give rise to subglutinol C and D, however, it remains unclear which enzymes are responsible for these transformations. SubD may have secondary function in the conversion of the identified subglutinols to subglutinol analog 45, which seems to be the major product of the cluster. This chain is Geranylgeranyl pyrophosphate synthase subD, found in Metarhizium robertsii (strain ARSEF 23 / ATCC MYA-3075) (Metarhizium anisopliae (strain ARSEF 23)).